Reading from the N-terminus, the 480-residue chain is Cytochrome b-c1 complex subunit 1, mitochondrial (480 aa).

The transit peptide at 1 to 34 (MAASAVCRAAGAGTRVLLRTRRSPALLRSSDLRG) directs the protein to the mitochondrion. Lys111 and Lys138 each carry N6-acetyllysine. Lys163 carries the N6-acetyllysine; alternate modification. At Lys163 the chain carries N6-succinyllysine; alternate. Ser212 is modified (phosphoserine). Position 248 is an N6-acetyllysine (Lys248).

The protein belongs to the peptidase M16 family. UQCRC1/QCR1 subfamily. As to quaternary structure, component of the ubiquinol-cytochrome c oxidoreductase (cytochrome b-c1 complex, complex III, CIII), a multisubunit enzyme composed of 11 subunits. The complex is composed of 3 respiratory subunits cytochrome b, cytochrome c1 and Rieske protein UQCRFS1, 2 core protein subunits UQCRC1/QCR1 and UQCRC2/QCR2, and 6 low-molecular weight protein subunits UQCRH/QCR6, UQCRB/QCR7, UQCRQ/QCR8, UQCR10/QCR9, UQCR11/QCR10 and subunit 9, the cleavage product of Rieske protein UQCRFS1. The complex exists as an obligatory dimer and forms supercomplexes (SCs) in the inner mitochondrial membrane with NADH-ubiquinone oxidoreductase (complex I, CI) and cytochrome c oxidase (complex IV, CIV), resulting in different assemblies (supercomplex SCI(1)III(2)IV(1) and megacomplex MCI(2)III(2)IV(2)). Interacts with UQCC6. Interacts with STMP1.

The protein resides in the mitochondrion inner membrane. Functionally, component of the ubiquinol-cytochrome c oxidoreductase, a multisubunit transmembrane complex that is part of the mitochondrial electron transport chain which drives oxidative phosphorylation. The respiratory chain contains 3 multisubunit complexes succinate dehydrogenase (complex II, CII), ubiquinol-cytochrome c oxidoreductase (cytochrome b-c1 complex, complex III, CIII) and cytochrome c oxidase (complex IV, CIV), that cooperate to transfer electrons derived from NADH and succinate to molecular oxygen, creating an electrochemical gradient over the inner membrane that drives transmembrane transport and the ATP synthase. The cytochrome b-c1 complex catalyzes electron transfer from ubiquinol to cytochrome c, linking this redox reaction to translocation of protons across the mitochondrial inner membrane, with protons being carried across the membrane as hydrogens on the quinol. In the process called Q cycle, 2 protons are consumed from the matrix, 4 protons are released into the intermembrane space and 2 electrons are passed to cytochrome c. The 2 core subunits UQCRC1/QCR1 and UQCRC2/QCR2 are homologous to the 2 mitochondrial-processing peptidase (MPP) subunits beta-MPP and alpha-MPP respectively, and they seem to have preserved their MPP processing properties. May be involved in the in situ processing of UQCRFS1 into the mature Rieske protein and its mitochondrial targeting sequence (MTS)/subunit 9 when incorporated into complex III. Seems to play an important role in the maintenance of proper mitochondrial function in nigral dopaminergic neurons. In Bos taurus (Bovine), this protein is Cytochrome b-c1 complex subunit 1, mitochondrial (UQCRC1).